Reading from the N-terminus, the 284-residue chain is MNLLQKNKINLRPFTKWTGGKRQLLPHIQYLMPEKYNHFFEPFIGGGALFFELAPQKAVINDFNSELINCYRQMKDNPEQLIELLTNHQRENSKEYYLDLRSSDRDGRIDKMSEVERAARIMYMLRVDFNGLYRVNSKNQFNVPYGRYKNPKIVDKELIESISEYLNNNSIKIMSGDFEKAVKEAQDGDFVYFDPPYIPLSETSAFTSYTHEGFSYEDQVRLRDCFKQLDSKGVFVMLSNSSSPLAEELYKDFNIHKIEATRTNGAKSSSRGKITEIIVTNYGN.

The S-adenosyl-L-methionine site is built by W17, K21, D62, and D194.

This sequence belongs to the N(4)/N(6)-methyltransferase family.

The enzyme catalyses a 2'-deoxyadenosine in DNA + S-adenosyl-L-methionine = an N(6)-methyl-2'-deoxyadenosine in DNA + S-adenosyl-L-homocysteine + H(+). In terms of biological role, an alpha subtype methylase, recognizes the double-stranded sequence 5'-GATC-3', methylates A-2 on both strands, and protects the DNA from cleavage by the LlaDCHI endonuclease. This chain is Type II methyltransferase M1.LlaDCHI, found in Lactococcus lactis subsp. cremoris (Streptococcus cremoris).